Here is a 728-residue protein sequence, read N- to C-terminus: NF-kappa-B inhibitor zeta (728 aa).

A disordered region spans residues 45-107 (GAGDTGYLSA…PHMGVGRQQR (63 aa)). Residues 53–82 (SAVPSAPGSPGSDSSDFSSTSSVSSCGAVE) show a composition bias toward low complexity. Residues 83 to 96 (SRPRGGARAERPQV) show a composition bias toward basic and acidic residues. An OCA domain is found at 107 to 129 (RGPFQGVRVKNSVKELLLHIRSN). The Nuclear localization signal motif lies at 163 to 178 (KRKGPDPLSDGPVCKR). 2 stretches are compositionally biased toward polar residues: residues 241–250 (PTVPQNSPRD) and 268–288 (QPFQ…YQYS). Positions 241–334 (PTVPQNSPRD…SQSPKYDSNL (94 aa)) are disordered. Over residues 303-315 (QQQHQQNYPHNSP) the composition is skewed to low complexity. Positions 316-330 (LQFSPYSRMSQSPKY) are enriched in polar residues. A required for transcriptional activity region spans residues 329–403 (KYDSNLFDTH…VGVHDVGSHS (75 aa)). The interaction with NFKB1/p50 stretch occupies residues 414 to 728 (MGSPMNTTQL…KSIQQRAPPY (315 aa)). 7 ANK repeats span residues 453–482 (DGDT…ALHM), 489–518 (NGQS…QVNT), 522–551 (WGRT…RSNQ), 561–589 (DGLT…SHSP), 591–617 (VQDL…AVEA), 622–651 (SGRT…CLSF), and 658–691 (NGNT…DPST).

Interacts with NFKB1/p50. Interacts with RELA. Interacts with AKIRIN2. Expressed in kidney, liver, lung and heart. Expressed at very low levels in skeletal muscle, spleen and brain.

It is found in the nucleus. Involved in regulation of NF-kappa-B transcription factor complexes. Inhibits NF-kappa-B activity without affecting its nuclear translocation upon stimulation. Inhibits DNA-binding of RELA and NFKB1/p50, and of the NF-kappa-B p65-p50 heterodimer and the NF-kappa-B p50-p50 homodimer. Also seems to activate NF-kappa-B-mediated transcription. In vitro, upon association with NFKB1/p50 has transcriptional activation activity and, together with NFKB1/p50 and RELA, is recruited to LCN2 promoters. Promotes transcription of LCN2 and DEFB4. Is recruited to IL-6 promoters and activates IL-6 but decreases TNF-alpha production in response to LPS. Seems to be involved in the induction of inflammatory genes activated through TLR/IL-1 receptor signaling. Involved in the induction of T helper 17 cells (Th17) differentiation upon recognition of antigen by T cell antigen receptor (TCR). The sequence is that of NF-kappa-B inhibitor zeta (Nfkbiz) from Mus musculus (Mouse).